We begin with the raw amino-acid sequence, 570 residues long: Urease subunit alpha (570 aa).

Positions G133–F570 constitute a Urease domain. The Ni(2+) site is built by H138, H140, and K221. K221 is modified (N6-carboxylysine). Residue H223 coordinates substrate. 2 residues coordinate Ni(2+): H250 and H276. H324 acts as the Proton donor in catalysis. D364 lines the Ni(2+) pocket.

It belongs to the metallo-dependent hydrolases superfamily. Urease alpha subunit family. Heterotrimer of UreA (gamma), UreB (beta) and UreC (alpha) subunits. Three heterotrimers associate to form the active enzyme. Ni cation serves as cofactor. In terms of processing, carboxylation allows a single lysine to coordinate two nickel ions.

It is found in the cytoplasm. It catalyses the reaction urea + 2 H2O + H(+) = hydrogencarbonate + 2 NH4(+). It participates in nitrogen metabolism; urea degradation; CO(2) and NH(3) from urea (urease route): step 1/1. The protein is Urease subunit alpha of Cytophaga hutchinsonii (strain ATCC 33406 / DSM 1761 / CIP 103989 / NBRC 15051 / NCIMB 9469 / D465).